A 153-amino-acid chain; its full sequence is Lipoprotein signal peptidase (153 aa).

3 consecutive transmembrane segments (helical) span residues 11-31 (ILILTIAGIFIIDQNIKSLFV), 39-59 (DCIDLILVYNKGVAFSMFAFL), and 68-88 (LVLVFGVFGYMLYLNQLCYAI). Catalysis depends on residues Asp-112 and Asp-129. A helical membrane pass occupies residues 122 to 142 (FAVFNFADVMIDVAVVWILLL).

Belongs to the peptidase A8 family.

Its subcellular location is the cell inner membrane. It carries out the reaction Release of signal peptides from bacterial membrane prolipoproteins. Hydrolyzes -Xaa-Yaa-Zaa-|-(S,diacylglyceryl)Cys-, in which Xaa is hydrophobic (preferably Leu), and Yaa (Ala or Ser) and Zaa (Gly or Ala) have small, neutral side chains.. The protein operates within protein modification; lipoprotein biosynthesis (signal peptide cleavage). This protein specifically catalyzes the removal of signal peptides from prolipoproteins. This is Lipoprotein signal peptidase from Sulfurimonas denitrificans (strain ATCC 33889 / DSM 1251) (Thiomicrospira denitrificans (strain ATCC 33889 / DSM 1251)).